The chain runs to 411 residues: Carbohydrate sulfotransferase 1 (411 aa).

Residues 1-2 are Cytoplasmic-facing; the sequence is MQ. A helical; Signal-anchor for type II membrane protein membrane pass occupies residues 3-23; sequence CSWKAVLLLALASIAIQYTAI. Residues 24 to 411 lie on the Lumenal side of the membrane; that stretch reads RTFTAKSFHT…VEERDFRPFL (388 aa). An N-linked (GlcNAc...) asparagine glycan is attached at Asn56. 69–75 provides a ligand contact to 3'-phosphoadenylyl sulfate; that stretch reads TRSGSSF. 2 N-linked (GlcNAc...) asparagine glycosylation sites follow: Asn145 and Asn189. 234–242 contributes to the 3'-phosphoadenylyl sulfate binding site; it reads RDPRGILAS. N-linked (GlcNAc...) asparagine glycosylation occurs at Asn334. The Cell attachment site signature appears at 337-339; it reads RGD.

It belongs to the sulfotransferase 1 family. Gal/GlcNAc/GalNAc subfamily. Broadly expressed with highest levels in central nervous system. Expressed in cortex (at protein level). Expressed in high endothelial venules in peripheral lymph nodes, mesenteric lymph nodes and Peyer's patches.

It is found in the golgi apparatus membrane. It carries out the reaction 3'-phosphoadenylyl sulfate + keratan = adenosine 3',5'-bisphosphate + keratan 6'-sulfate.. It functions in the pathway glycan metabolism. Its function is as follows. Sulfotransferase that utilizes 3'-phospho-5'-adenylyl sulfate (PAPS) as sulfonate donor to catalyze the transfer of sulfate to position 6 of internal galactose (Gal) residues of keratan. Cooperates with B4GALT4 and B3GNT7 glycosyltransferases and CHST6 sulfotransferase to construct and elongate disulfated disaccharide unit [-&gt;3(6-sulfoGalbeta)1-&gt;4(6-sulfoGlcNAcbeta)1-&gt;] within keratan sulfate polymer. Has a preference for sulfating keratan sulfate, but it also transfers sulfate to the unsulfated polymer. Involved in biosynthesis of phosphacan, a major keratan sulfate proteoglycan in the developing brain. Involved in biosynthesis of 6-sulfoGalbeta-containing O-linked glycans in high endothelial venules of lymph nodes. May act in a synergistic manner with CHST4 to generate sialyl 6',6-disulfo Lewis X motif, a recognition determinant for immune cell receptors implicated in leukocyte trafficking. Catalyzes sulfation of N-acetyllactosamine (LacNAc) oligosaccharides with highest efficiency for sialylated LacNAc structures. The polypeptide is Carbohydrate sulfotransferase 1 (Chst1) (Mus musculus (Mouse)).